The sequence spans 1112 residues: MGDMSNSDFYAKNQRNEGNHAAAFGCSLMELRSLMELRGTEAVVKLQEDYGGVEGLCKRLKTSPTEGLAGAQTDLDKRKEIFGKNLIPPKKPKTFLQLVWEALQDVTLIILEIAALISLGLSFYHPPGETGGESCGAAAGGVEDEGEADAGWIEGAAILLSVVCVVLVTAFNDWSKEKQFRGLQSRIEQEQKFQVVRGSQVIQLPVADILVGDIAQIKYGDLLPSDGVLIQGNDLKIDESSLTGESDHVKKSADKDPMLLSGTHVMEGSGRMVVTAVGVNSQTGIIFTLLGAGVEEEEKKEKKGGAVEDGHQNTGKMQDGNMESNQIKVKKQDGAAAMEMQPLKSAEGGEADEKERKKVSAPKKEKSVLQGKLTKLAVQIGKAGLLMSAITVIILVLYFAIDNFVMQKRPWMPECTPIYIQYFVKFFIIGVTVLVVAVPEGLPLAVTISLAYSVKKMMKDNNLVRHLDACETMGNATAICSDKTGTLTTNRMTAVQLYVGDVRYKEIPDPGVLPPKSLDLLVNAISINSAYTTKILPPDKEGGLPKQVGNKTECGLLGLVLELKRDYQPIRNQIPEEKLYKVYTFNSVRKSMSTVIKLPDGSFRMYSKGASEIVLKKCSHILNEVGEPRVFRPRDKDEMVKKVIEPMACDGLRTICVAYRDFSSNPEPNWDDENNILNDLTAICVVGIEDPVRPEVPNAIQKCQRAGITVRMVTGANINTARAIAIKCGIIHPGEDFLCIDGKEFNRRIRNEKGEVEQERIDKVWPKLRVLARSSPTDKHTLVKGIIDSTMADQRQVVAVTGDGTNDGPALKKADVGFAMGIAGTDVAKEASDIILTDDNFSSIVKAVMWGRNVYDSISKFLQFQLTVNVVAVIVAFTGACITQDSPLKAVQMLWVNLIMDTFASLALATEPPTESLLKRKPYGRNKPLISSTMTKNILGHGVYQLIIIFTLLFVGEQIFDIDSGRNAPLHSPPSEHYTIIFNTFVMMQLFNEINARKIHGERNVFDGIFRNPIFCSIVFGTFAVQIVIVQFGGKPFSCQPLDLEKWMWCVFLGLGELVWGQVIATIPNSRLRFLRRAGQLTQKDELPEEDVNEENEEIDHAERELRRGQIL.

At 1–94 the chain is on the cytoplasmic side; that stretch reads MGDMSNSDFY…NLIPPKKPKT (94 aa). Residues 95–115 form a helical membrane-spanning segment; that stretch reads FLQLVWEALQDVTLIILEIAA. Residues 116-152 lie on the Extracellular side of the membrane; the sequence is LISLGLSFYHPPGETGGESCGAAAGGVEDEGEADAGW. The chain crosses the membrane as a helical span at residues 153–173; it reads IEGAAILLSVVCVVLVTAFND. The Cytoplasmic portion of the chain corresponds to 174 to 373; sequence WSKEKQFRGL…KEKSVLQGKL (200 aa). The span at 298–311 shows a compositional bias: basic and acidic residues; the sequence is EKKEKKGGAVEDGH. Positions 298–363 are disordered; sequence EKKEKKGGAV…KERKKVSAPK (66 aa). Positions 312-327 are enriched in polar residues; it reads QNTGKMQDGNMESNQI. A compositionally biased stretch (basic and acidic residues) spans 351 to 363; sequence ADEKERKKVSAPK. The helical transmembrane segment at 374–393 threads the bilayer; the sequence is TKLAVQIGKAGLLMSAITVI. Topologically, residues 394-426 are extracellular; the sequence is ILVLYFAIDNFVMQKRPWMPECTPIYIQYFVKF. The chain crosses the membrane as a helical span at residues 427 to 444; that stretch reads FIIGVTVLVVAVPEGLPL. At 445–858 the chain is on the cytoplasmic side; the sequence is AVTISLAYSV…MWGRNVYDSI (414 aa). The active-site 4-aspartylphosphate intermediate is the Asp482. Mg(2+) contacts are provided by Asp803 and Asp807. The helical transmembrane segment at 859–878 threads the bilayer; it reads SKFLQFQLTVNVVAVIVAFT. The Extracellular portion of the chain corresponds to 879 to 888; it reads GACITQDSPL. A helical membrane pass occupies residues 889 to 909; that stretch reads KAVQMLWVNLIMDTFASLALA. Residues 910 to 929 are Cytoplasmic-facing; it reads TEPPTESLLKRKPYGRNKPL. Residues 930–952 traverse the membrane as a helical segment; it reads ISSTMTKNILGHGVYQLIIIFTL. Residues 953 to 970 are Extracellular-facing; sequence LFVGEQIFDIDSGRNAPL. The chain crosses the membrane as a helical span at residues 971-992; that stretch reads HSPPSEHYTIIFNTFVMMQLFN. At 993 to 1011 the chain is on the cytoplasmic side; the sequence is EINARKIHGERNVFDGIFR. The chain crosses the membrane as a helical span at residues 1012–1033; that stretch reads NPIFCSIVFGTFAVQIVIVQFG. Residues 1034–1043 are Extracellular-facing; sequence GKPFSCQPLD. A helical transmembrane segment spans residues 1044-1065; it reads LEKWMWCVFLGLGELVWGQVIA. The Cytoplasmic portion of the chain corresponds to 1066–1112; it reads TIPNSRLRFLRRAGQLTQKDELPEEDVNEENEEIDHAERELRRGQIL. Residues 1086–1112 are disordered; that stretch reads ELPEEDVNEENEEIDHAERELRRGQIL. Residues 1087–1098 show a composition bias toward acidic residues; that stretch reads LPEEDVNEENEE. Positions 1099-1112 are enriched in basic and acidic residues; it reads IDHAERELRRGQIL. Residues 1106 to 1112 are calmodulin-binding subdomain A; sequence LRRGQIL.

The protein belongs to the cation transport ATPase (P-type) (TC 3.A.3) family. Type IIB subfamily.

Its subcellular location is the cell membrane. The catalysed reaction is Ca(2+)(in) + ATP + H2O = Ca(2+)(out) + ADP + phosphate + H(+). In terms of biological role, this magnesium-dependent enzyme catalyzes the hydrolysis of ATP coupled with the transport of calcium out of the cell. This is Plasma membrane calcium-transporting ATPase 2 (atp2b2) from Oreochromis mossambicus (Mozambique tilapia).